A 376-amino-acid polypeptide reads, in one-letter code: 3-aminomethylindole N-methyltransferase (376 aa).

Positions 220, 243, 263, and 264 each coordinate S-adenosyl-L-homocysteine.

It belongs to the class I-like SAM-binding methyltransferase superfamily. Cation-independent O-methyltransferase family. More present in the fifth leaf than in the second leaf (at protein level).

The enzyme catalyses 3-(aminomethyl)indole + 2 S-adenosyl-L-methionine = gramine + 2 S-adenosyl-L-homocysteine + 2 H(+). The protein operates within alkaloid biosynthesis. Its activity is regulated as follows. Repressed by sodium carbonate, sodium bicarbonate and K-phosphate. Its function is as follows. Methylates 3-aminomethylindole (AMI) and N-methyl-3-aminomethylindole (MAMI), two substrates involved in gramine biosynthesis, a toxic indole alkaloid. Can use S-adenosyl-L-methionine (AdoMet) as a methyl donor. Unable to mediate caffeic acid O-methylation. The chain is 3-aminomethylindole N-methyltransferase from Hordeum vulgare subsp. vulgare (Domesticated barley).